Here is a 285-residue protein sequence, read N- to C-terminus: Sulfotransferase 2A1 (285 aa).

Residues Lys-44, Ser-45, Gly-46, Thr-47, Asn-48, and Trp-49 each coordinate 3'-phosphoadenylyl sulfate. The Proton acceptor role is filled by His-99. 3'-phosphoadenylyl sulfate is bound by residues Arg-121, Ser-129, Tyr-184, Ser-218, Met-223, Arg-247, Lys-248, and Gly-249. Ser-251 bears the Phosphoserine mark.

The protein belongs to the sulfotransferase 1 family. In terms of assembly, homodimer. In terms of tissue distribution, predominanly expressed in liver. Detected also in adrenal gland and in jejunum.

The protein localises to the cytoplasm. It is found in the cytosol. It carries out the reaction an alcohol + 3'-phosphoadenylyl sulfate = an alkyl sulfate + adenosine 3',5'-bisphosphate + H(+). The enzyme catalyses 3beta-hydroxyandrost-5-en-17-one + 3'-phosphoadenylyl sulfate = dehydroepiandrosterone 3-sulfate + adenosine 3',5'-bisphosphate + H(+). The catalysed reaction is taurolithocholate + 3'-phosphoadenylyl sulfate = taurolithocholate 3-sulfate + adenosine 3',5'-bisphosphate + H(+). It catalyses the reaction lithocholate + 3'-phosphoadenylyl sulfate = lithocholate sulfate + adenosine 3',5'-bisphosphate + H(+). It carries out the reaction (24S)-hydroxycholesterol + 3'-phosphoadenylyl sulfate = (24S)-hydroxycholesterol 24-sulfate + adenosine 3',5'-bisphosphate + H(+). The enzyme catalyses (24S)-hydroxycholesterol + 3'-phosphoadenylyl sulfate = (24S)-hydroxycholesterol 3-sulfate + adenosine 3',5'-bisphosphate + H(+). The catalysed reaction is (24S)-hydroxycholesterol 24-sulfate + 3'-phosphoadenylyl sulfate = (24S)-hydroxycholesterol 3,24-disulfate + adenosine 3',5'-bisphosphate + H(+). It catalyses the reaction pregnenolone + 3'-phosphoadenylyl sulfate = pregnenolone sulfate + adenosine 3',5'-bisphosphate + H(+). It carries out the reaction androsterone + 3'-phosphoadenylyl sulfate = androsterone 3alpha-sulfate + adenosine 3',5'-bisphosphate + H(+). Its function is as follows. Sulfotransferase that utilizes 3'-phospho-5'-adenylyl sulfate (PAPS) as sulfonate donor to catalyze the sulfonation of steroids and bile acids in the liver and adrenal glands. Mediates the sulfation of a wide range of steroids and sterols, including pregnenolone, androsterone, DHEA, bile acids, cholesterol and as well many xenobiotics that contain alcohol and phenol functional groups. Sulfonation increases the water solubility of most compounds, and therefore their renal excretion, but it can also result in bioactivation to form active metabolites. Plays an important role in maintening steroid and lipid homeostasis. Plays a key role in bile acid metabolism. In addition, catalyzes the metabolic activation of potent carcinogenic polycyclic arylmethanols. This chain is Sulfotransferase 2A1 (SULT2A1), found in Macaca fascicularis (Crab-eating macaque).